The following is a 60-amino-acid chain: SDDKCQGRPMYGCREDDDSVFGWTYDSNHGQCWKGSYCKHRRQPSNYFASQQECRNTCGA.

Positions 14–16 (RED) match the Cell attachment site; atypical motif.

In terms of tissue distribution, expressed in salivary glands.

The protein localises to the secreted. In terms of biological role, tick salivary platelet aggregation inhibitor that plays an important part in the anti-hemostatic strategy of ticks. Inhibits fibrinogen interaction with platelets. Acts by binding (in a divalent metal ion dependent manner) to the glycoprotein IIb-IIIa receptor (ITGA2B/ITGB3) on the platelet surface and inhibits aggregation induced by ADP (IC(50)=99-104 nM), thrombin, collagen (IC(50)=64 nM) platelet-activating factor and collagen. Interacts to unstimulated platelets (Kd=42.5 nM) and to ADP-stimulated platelets (Kd=39.4 nM). In contrast to many disintegrins which only interact with the beta-3 subunit, interacts with the two subunits (alpha-IIb and beta-3). Under flow conditions, reduces and delays platelet adhesion, aggregation, and fibrin formation. The sequence is that of Disagregin from Ornithodoros moubata (Soft tick).